Here is a 341-residue protein sequence, read N- to C-terminus: Syntaxin-122 (341 aa).

Methionine 1 is modified (N-acetylmethionine). Disordered stretches follow at residues 1 to 22 (MNDL…PPHS) and 111 to 137 (LDRA…RTSV). The Cytoplasmic segment spans residues 1–284 (MNDLLSGSFK…ARFYQKNTRK (284 aa)). Polar residues-rich tracts occupy residues 8–21 (SFKT…SPPH) and 126–137 (PGSSSDRQRTSV). The stretch at 64–185 (CHNLRSSNEQ…GEYPDEATLE (122 aa)) forms a coiled coil. The t-SNARE coiled-coil homology domain occupies 213–275 (INEIQERHDA…RSGADRLVKA (63 aa)). A helical; Anchor for type IV membrane protein transmembrane segment spans residues 285–305 (WTCFAILLLLIIVVLIVVFTV). At 306–341 (KPWESNGGGGGGAPRQATPVQAQPPPPPAVNRRLLR) the chain is on the vesicular side. The disordered stretch occupies residues 312-341 (GGGGGGAPRQATPVQAQPPPPPAVNRRLLR).

This sequence belongs to the syntaxin family. In terms of assembly, part of the t-SNARE complex.

Its subcellular location is the membrane. Vesicle trafficking protein that functions in the secretory pathway. The sequence is that of Syntaxin-122 (SYP122) from Arabidopsis thaliana (Mouse-ear cress).